A 292-amino-acid polypeptide reads, in one-letter code: ATP synthase gamma chain (292 aa).

This sequence belongs to the ATPase gamma chain family. F-type ATPases have 2 components, CF(1) - the catalytic core - and CF(0) - the membrane proton channel. CF(1) has five subunits: alpha(3), beta(3), gamma(1), delta(1), epsilon(1). CF(0) has three main subunits: a, b and c.

It is found in the cell inner membrane. Functionally, produces ATP from ADP in the presence of a proton gradient across the membrane. The gamma chain is believed to be important in regulating ATPase activity and the flow of protons through the CF(0) complex. This Nautilia profundicola (strain ATCC BAA-1463 / DSM 18972 / AmH) protein is ATP synthase gamma chain.